The primary structure comprises 157 residues: Probable succinate transporter subunit YjjB (157 aa).

4 helical membrane-spanning segments follow: residues 8–28 (LALA…AMVF), 50–70 (MILM…SMLV), 87–107 (VFTV…TAMI), and 129–149 (FLTA…PGLW).

It belongs to the ThrE exporter (TC 2.A.79) family. In terms of assembly, the transporter is composed of YjjB and YjjP.

It localises to the cell inner membrane. In terms of biological role, involved in succinate export with YjjP. Both proteins are required for export. The polypeptide is Probable succinate transporter subunit YjjB (Shigella flexneri serotype 5b (strain 8401)).